The sequence spans 294 residues: Golgi to ER traffic protein 2 (294 aa).

The disordered stretch occupies residues 1-104 (MSSELSETEK…QATSPQETID (104 aa)). Topologically, residues 1–166 (MSSELSETEK…LDYNNYLINN (166 aa)) are cytoplasmic. Basic residues predominate over residues 12-21 (KLIRERRQKK). The span at 34 to 65 (ITGQAENSQLDTESPLDSKSSRETTPTVTKVD) shows a compositional bias: polar residues. The segment covering 85–95 (KVEKSQKKKEQ) has biased composition (basic and acidic residues). The helical transmembrane segment at 167–187 (LKVWSIIFKWCFFLIPYLFAL) threads the bilayer. Residues 188–205 (TRSEPISFLPEQFSNPSN) lie on the Lumenal side of the membrane. Residues 206-225 (FFMIFLSFEIVATSIYFQKL) traverse the membrane as a helical segment. Topologically, residues 226 to 272 (QNIEKSNKINGFQSNNKIVNLVSLIPEGVLPVPDIKGKVIMALQYWD) are cytoplasmic. The chain crosses the membrane as a helical span at residues 273 to 293 (VFSMFLTDICFVLVMMGLFKL). Ile294 is a topological domain (lumenal).

It belongs to the GET2 family. As to quaternary structure, component of the Golgi to ER traffic (GET) complex, which is composed of GET1, GET2 and GET3. Within the complex, GET1 and GET2 form a heterotetramer which is stabilized by phosphatidylinositol binding and which binds to the GET3 homodimer.

The protein resides in the endoplasmic reticulum membrane. It localises to the golgi apparatus membrane. Its function is as follows. Required for the post-translational delivery of tail-anchored (TA) proteins to the endoplasmic reticulum. Together with GET1, acts as a membrane receptor for soluble GET3, which recognizes and selectively binds the transmembrane domain of TA proteins in the cytosol. The GET complex cooperates with the HDEL receptor ERD2 to mediate the ATP-dependent retrieval of resident ER proteins that contain a C-terminal H-D-E-L retention signal from the Golgi to the ER. The chain is Golgi to ER traffic protein 2 from Vanderwaltozyma polyspora (strain ATCC 22028 / DSM 70294 / BCRC 21397 / CBS 2163 / NBRC 10782 / NRRL Y-8283 / UCD 57-17) (Kluyveromyces polysporus).